The chain runs to 223 residues: Cytidylate kinase (223 aa).

10-18 is an ATP binding site; that stretch reads GPASSGKST.

Belongs to the cytidylate kinase family. Type 1 subfamily.

The protein localises to the cytoplasm. It carries out the reaction CMP + ATP = CDP + ADP. The enzyme catalyses dCMP + ATP = dCDP + ADP. The sequence is that of Cytidylate kinase from Streptococcus pneumoniae (strain 70585).